A 558-amino-acid polypeptide reads, in one-letter code: Phosphatidylserine lipase ABHD16A (558 aa).

2 helical membrane-spanning segments follow: residues 60 to 80 (ILAL…FAFF) and 93 to 113 (VVPF…VACL). Residues 114–558 (RGIGRWTNPQ…AQNFQMPWHL (445 aa)) lie on the Cytoplasmic side of the membrane. The AB hydrolase-1 domain maps to 281-407 (LVICCEGNAG…LVTRTVRQHL (127 aa)). Catalysis depends on charge relay system residues Ser355, Asp430, and His507.

The protein belongs to the AB hydrolase superfamily. ABHD16 family.

Its subcellular location is the membrane. It carries out the reaction 1-heptadecanoyl-2-(5Z,8Z,11Z,14Z-eicosatetraenoyl)-sn-glycero-3-phosphoserine + H2O = 1-heptadecanoyl-sn-glycero-3-phosphoserine + (5Z,8Z,11Z,14Z)-eicosatetraenoate + H(+). It catalyses the reaction 1-hexadecanoyl-2-(9Z-octadecenoyl)-sn-glycero-3-phospho-L-serine + H2O = 1-hexadecanoyl-sn-glycero-3-phospho-L-serine + (9Z)-octadecenoate + H(+). The catalysed reaction is 1-octadecanoyl-2-(9Z,12Z-octadecadienoyl)-sn-glycero-3-phosphoserine + H2O = 1-octadecanoyl-sn-glycero-3-phosphoserine + (9Z,12Z)-octadecadienoate + H(+). The enzyme catalyses 1-heptadecanoyl-2-(5Z,8Z,11Z,14Z-eicosatetraenoyl)-sn-glycero-3-phosphocholine + H2O = 1-heptadecanoyl-sn-glycero-3-phosphocholine + (5Z,8Z,11Z,14Z)-eicosatetraenoate + H(+). It carries out the reaction 1-hexadecanoyl-2-(9Z-octadecenoyl)-sn-glycero-3-phosphoglycerol + H2O = 1-hexadecanoyl-sn-glycero-3-phosphoglycerol + (9Z)-octadecenoate + H(+). It catalyses the reaction 1-hexadecanoyl-2-(9Z-octadecenoyl)-sn-glycero-3-phospho-(1D-myo-inositol) + H2O = 1-hexadecanoyl-sn-glycero-3-phospho-(1D-myo-inositol) + (9Z)-octadecenoate + H(+). The catalysed reaction is 1-heptadecanoyl-2-(5Z,8Z,11Z,14Z-eicosatetraenoyl)-sn-glycero-3-phosphoethanolamine + H2O = 1-heptadecanoyl-sn-glycero-3-phosphoethanolamine + (5Z,8Z,11Z,14Z)-eicosatetraenoate + H(+). The enzyme catalyses 1-hexadecanoyl-2-(9Z-octadecenoyl)-sn-glycero-3-phospho-(1'-sn-glycerol) + H2O = 1-hexadecanoyl-sn-glycero-3-phospho-(1'-sn-glycerol) + (9Z)-octadecenoate + H(+). It carries out the reaction Hydrolyzes glycerol monoesters of long-chain fatty acids.. It catalyses the reaction 1-tetradecanoylglycerol + H2O = tetradecanoate + glycerol + H(+). The catalysed reaction is 2-hexadecanoylglycerol + H2O = glycerol + hexadecanoate + H(+). The enzyme catalyses 1-(9Z-octadecenoyl)-glycerol + H2O = glycerol + (9Z)-octadecenoate + H(+). It carries out the reaction 2-(9Z-octadecenoyl)-glycerol + H2O = glycerol + (9Z)-octadecenoate + H(+). It catalyses the reaction 2-(9Z,12Z-octadecadienoyl)-glycerol + H2O = (9Z,12Z)-octadecadienoate + glycerol + H(+). The catalysed reaction is 1-(5Z,8Z,11Z,14Z-eicosatetraenoyl)-glycerol + H2O = glycerol + (5Z,8Z,11Z,14Z)-eicosatetraenoate + H(+). The enzyme catalyses 2-(5Z,8Z,11Z,14Z-eicosatetraenoyl)-glycerol + H2O = glycerol + (5Z,8Z,11Z,14Z)-eicosatetraenoate + H(+). It carries out the reaction prostaglandin D2-1-glycerol ester + H2O = prostaglandin D2 + glycerol + H(+). It catalyses the reaction 2-glyceryl-15-deoxy-Delta(12,14)-prostaglandin J2 + H2O = 15-deoxy-Delta(12,14)-prostaglandin J2 + glycerol + H(+). The catalysed reaction is 1-(9Z,12Z-octadecadienoyl)-glycerol + H2O = (9Z,12Z)-octadecadienoate + glycerol + H(+). With respect to regulation, inhibited by beta-lactone-based lipid inhibitors, such as beta-lactone palmostatin-B. Its function is as follows. Phosphatidylserine (PS) lipase that mediates the hydrolysis of phosphatidylserine to generate lysophosphatidylserine (LPS). LPS constitutes a class of signaling lipids that regulates immunological and neurological processes. Has no activity towards diacylglycerol, triacylglycerol or lysophosphatidylserine lipase. Also has monoacylglycerol lipase activity, with preference for 1-(9Z,12Z-octadecadienoyl)-glycerol (1-LG) and 2-glyceryl-15-deoxy-Delta(12,14)-prostaglandin J2 (15d-PGJ(2)-G). In Homo sapiens (Human), this protein is Phosphatidylserine lipase ABHD16A.